Consider the following 338-residue polypeptide: LTAAVAVAGGNSRYVLDGVPRMRERPIGDLVDGLKQLGAEVDCFLGTKCPPVRIVSKGGLPGGKVKLSGSISSQYLTALLMAAPLALGDVEIEIIDKLISVLYVEMTLKLMERFGISVEHSSSWDRFVVRGGQKYKSPGKAYVEGDASSASYFLAGAAVTGGTVTVEGCGTSSLQGDVKFAEVLEQMGAEVTWTENSVTVKGPPRNSSAMKHLRAIDVNMNKMPDVAMTLAVVALFADGPTAIRDVASWRVKETERMIAICTELRKLGATVEEGPDYCIITPPEKLNVTEIDTYDDHRMAMAFSLAACADVPVTINDPGCTRKTFPNYFDVLQQYSKH.

R25 contacts phosphoenolpyruvate. Residues S72, S73, Q74, S100, D225, and K252 each coordinate 3-phosphoshikimate. Residue Q74 coordinates phosphoenolpyruvate. The active-site Proton acceptor is D225. Phosphoenolpyruvate-binding residues include R256, R298, and K323.

This sequence belongs to the EPSP synthase family.

The protein localises to the plastid. It localises to the chloroplast. It carries out the reaction 3-phosphoshikimate + phosphoenolpyruvate = 5-O-(1-carboxyvinyl)-3-phosphoshikimate + phosphate. It functions in the pathway metabolic intermediate biosynthesis; chorismate biosynthesis; chorismate from D-erythrose 4-phosphate and phosphoenolpyruvate: step 6/7. Functionally, catalyzes the transfer of the enolpyruvyl moiety of phosphoenolpyruvate (PEP) to the 5-hydroxyl of shikimate-3-phosphate (S3P) to produce enolpyruvyl shikimate-3-phosphate and inorganic phosphate. The sequence is that of 3-phosphoshikimate 1-carboxyvinyltransferase 2 (EPSPS-2) from Nicotiana tabacum (Common tobacco).